Reading from the N-terminus, the 190-residue chain is MSIILGIDPGSRVTGYGVIRQTGKHLEYLGSGAIRTQVEDLPTRLKRIYAGVTEIITQFQPNMFAIEQVFMAKNADSALKLGQARGTAIVAAVNNDLPVFEYAARLVKQTVVGIGSADKVQVQEMVTRILKLSDKPQADAADALAIAITHAHSIQHSLHIANSVKMTETQEKMTALLKTRYSRGRFRLKI.

Residues aspartate 8, glutamate 67, and aspartate 139 contribute to the active site. Positions 8, 67, and 139 each coordinate Mg(2+).

Belongs to the RuvC family. As to quaternary structure, homodimer which binds Holliday junction (HJ) DNA. The HJ becomes 2-fold symmetrical on binding to RuvC with unstacked arms; it has a different conformation from HJ DNA in complex with RuvA. In the full resolvosome a probable DNA-RuvA(4)-RuvB(12)-RuvC(2) complex forms which resolves the HJ. Mg(2+) serves as cofactor.

The protein localises to the cytoplasm. It carries out the reaction Endonucleolytic cleavage at a junction such as a reciprocal single-stranded crossover between two homologous DNA duplexes (Holliday junction).. In terms of biological role, the RuvA-RuvB-RuvC complex processes Holliday junction (HJ) DNA during genetic recombination and DNA repair. Endonuclease that resolves HJ intermediates. Cleaves cruciform DNA by making single-stranded nicks across the HJ at symmetrical positions within the homologous arms, yielding a 5'-phosphate and a 3'-hydroxyl group; requires a central core of homology in the junction. The consensus cleavage sequence is 5'-(A/T)TT(C/G)-3'. Cleavage occurs on the 3'-side of the TT dinucleotide at the point of strand exchange. HJ branch migration catalyzed by RuvA-RuvB allows RuvC to scan DNA until it finds its consensus sequence, where it cleaves and resolves the cruciform DNA. The protein is Crossover junction endodeoxyribonuclease RuvC of Haemophilus influenzae (strain ATCC 51907 / DSM 11121 / KW20 / Rd).